The chain runs to 103 residues: Putative protein YmfH (103 aa).

Positions 1 to 34 (MVNAAQRTRVKVEADNRPSVDTHPPGVQPSPGTG) are disordered. Positions 10–20 (VKVEADNRPSV) are enriched in basic and acidic residues. Transmembrane regions (helical) follow at residues 42–62 (MLCV…TALF) and 73–93 (GLIT…CFVE).

The protein localises to the cell inner membrane. This chain is Putative protein YmfH (ymfH), found in Escherichia coli (strain K12).